The following is a 111-amino-acid chain: Ig heavy chain V-III region HPC76 (111 aa).

One can recognise an Ig-like domain in the interval 1–110 (ESGGGLVQPG…WGQGTTLTVS (110 aa)).

This Mus musculus (Mouse) protein is Ig heavy chain V-III region HPC76.